Consider the following 430-residue polypeptide: Putative chloroquine resistance transporter (430 aa).

The tract at residues 1-22 (MLKEGSSLDLSASSSSGTLRSD) is disordered. The Cytoplasmic portion of the chain corresponds to 1–53 (MLKEGSSLDLSASSSSGTLRSDNSFGNSPLDRITSLLILIYKSIRACFKWIYS). The segment covering 7 to 21 (SLDLSASSSSGTLRS) has biased composition (low complexity). Residues 54–74 (KSFGIICILFVILDVLTTVFF) traverse the membrane as a helical segment. The Vacuolar segment spans residues 75–88 (KRFIDHTKNYVMFT). Residues 89 to 109 (IQVIIFTFWIIVCCIAILCFL) traverse the membrane as a helical segment. Topologically, residues 110–122 (FNREYMKRHFNVR) are cytoplasmic. A helical membrane pass occupies residues 123–143 (PLVFLGFLDMLSTGLSANGSA). At 144–147 (HTSG) the chain is on the vacuolar side. The helical transmembrane segment at 148–168 (LMLVLLGQISVPLTMVSCKLI) threads the bilayer. Residues 169–173 (LSKKY) lie on the Cytoplasmic side of the membrane. The helical transmembrane segment at 174 to 194 (HHYQYISSAIILTFAVLKPIL) threads the bilayer. N195 carries an N-linked (GlcNAc...) asparagine glycan. Residues 195-206 (NRTDTTDNRFYN) lie on the Vacuolar side of the membrane. The helical transmembrane segment at 207–223 (NMLYLLASVPDSIASAL) threads the bilayer. Over 224-239 (REKQYTSKFFHVVKYQ) the chain is Cytoplasmic. The chain crosses the membrane as a helical span at residues 240-260 (FFGFLFHFFYNILYTLLFTLP). Over 261–306 (FNSVKGYFDSLYKLCVNGYKCIFFGVNTITENCGPTLIPTCDNCLE) the chain is Vacuolar. Disulfide bonds link C281/C304 and C293/C301. Residues 307-329 (AFKIYCLYILFSSAIRVAYVFIM) traverse the membrane as a helical segment. Over 330–335 (LDGSVT) the chain is Cytoplasmic. Residues 336–358 (FTLLLGTVKVPLTSIAFSLRFIA) traverse the membrane as a helical segment. Over 359-364 (GDSTTS) the chain is Vacuolar. The helical transmembrane segment at 365 to 385 (FNLLDVVCFLGIVAGLLLYAL) threads the bilayer. Residues 386–430 (GSKKIQEETDLLESPLIDDAESEHELLSTGTEKLMRSEICHDLFT) lie on the Cytoplasmic side of the membrane.

It belongs to the CRT-like transporter family.

Its subcellular location is the vacuole membrane. Nutrient transporter. Involved in maintaining the osmotic homeostasis of the digestive vacuole. In Theileria annulata, this protein is Putative chloroquine resistance transporter.